Consider the following 114-residue polypeptide: Nucleoid-associated protein NT01CX_0824 (114 aa).

It belongs to the YbaB/EbfC family. As to quaternary structure, homodimer.

The protein localises to the cytoplasm. Its subcellular location is the nucleoid. In terms of biological role, binds to DNA and alters its conformation. May be involved in regulation of gene expression, nucleoid organization and DNA protection. In Clostridium novyi (strain NT), this protein is Nucleoid-associated protein NT01CX_0824.